A 440-amino-acid chain; its full sequence is Actin-like protein 7A (440 aa).

Residues 1 to 27 (MSLDAVWAPQTANIGDGPAKKASDQTS) are disordered. The required for interaction with TES stretch occupies residues 36 to 56 (ASLRDGPAKRAVWVRRDNAEK).

It belongs to the actin family. As to quaternary structure, interacts (via N-terminus) with TES (via LIM domain 2). Heterodimer with TES; the heterodimer interacts with ENAH to form a heterotrimer. Interacts with ACTL9. Interacts with CYLC1; the interaction may be relevant for proper acrosome attachment to the nuclear envelope. In terms of tissue distribution, detected in testis. Detected at the acrosome of round spermatids (at protein level).

The protein localises to the cytoplasm. It localises to the cytoskeleton. Its subcellular location is the golgi apparatus. It is found in the nucleus. Functionally, essential for normal spermatogenesis and male fertility. Required for normal sperm head morphology, acroplaxome formation, acrosome attachment, and acrosome granule stability. May anchor and stabilize acrosomal adherence to the acroplaxome at least in part by facilitating the presence of F-actin in the subacrosomal space. May play an important role in formation and fusion of Golgi-derived vesicles during acrosome biogenesis. The polypeptide is Actin-like protein 7A (Actl7a) (Rattus norvegicus (Rat)).